The sequence spans 124 residues: Competence protein ComGG (124 aa).

The N-terminal stretch at 1-28 (MYRTRGFIYPAVLFVSALVLLIVNFVAA) is a signal peptide.

The transformation pili are flexible filaments, consisting mainly of the major pilin ComGC and smaller amounts of the minor pilins, including at least ComGD, ComGF and ComGG. Interacts with ComGC; the interaction is probably direct. Interacts with ComGD. Interacts with ComGF. May act as a link between ComGC, ComGD and ComGF. Homodimer; disulfide-linked. A minor fraction of ComGG is found as a disulfide-bonded homodimer. In terms of processing, partial processing of ComGG in competent cells requires ComC.

The protein localises to the cell membrane. Its subcellular location is the secreted. Its function is as follows. Required for formation of the type IV-like pilus (T4P) that plays a role in transformation. Transformation pili are dynamically extended and retracted, perhaps thereby promoting DNA uptake and transformation. Required for transformation and DNA binding. In Bacillus subtilis (strain 168), this protein is Competence protein ComGG (comGG).